A 198-amino-acid polypeptide reads, in one-letter code: Riboflavin synthase (198 aa).

2 Lumazine-binding repeats span residues 1 to 95 (MFSG…IGGH) and 96 to 188 (FVSG…VDTV). 2,4-dihydroxypteridine-binding positions include 4-6 (GII), 46-48 (CLT), 60-65 (DVTEET), 99-101 (GHV), K130, 139-141 (SLT), and 153-158 (SVIPET).

Homotrimer.

It carries out the reaction 2 6,7-dimethyl-8-(1-D-ribityl)lumazine + H(+) = 5-amino-6-(D-ribitylamino)uracil + riboflavin. It functions in the pathway cofactor biosynthesis; riboflavin biosynthesis; riboflavin from 2-hydroxy-3-oxobutyl phosphate and 5-amino-6-(D-ribitylamino)uracil: step 2/2. Its function is as follows. Catalyzes the dismutation of two molecules of 6,7-dimethyl-8-ribityllumazine, resulting in the formation of riboflavin and 5-amino-6-(D-ribitylamino)uracil. The chain is Riboflavin synthase (ribE) from Chlamydia muridarum (strain MoPn / Nigg).